The primary structure comprises 633 residues: MNGETPDASHPQQSRAELTLAALGVVYGDIGTSPLYAVKETFNPAHGIPLVTENILGGISAILWALMVVVSLKYVILIMRANNRGEGGIMALLALALSSVKKVGRSPTPILLVGLFGAALFYGDAVLTPAMSVLSALEGIEVGTTALQPYVLPASVGVLIALFLFQRHGTAAIGALFGPVTIVWFLALAAAGIHGIARYPAILGALSPLHALGFVTQHGFASFAVLGAVLLAFTGAEALYADMGHFGSAPIRLAWFGLVFPALALNYLGQGALIIVNAKAIENPFYLLYPSWALYPMVALATAATVIASQATISGAYSLTKQGIQLGYLPRMNVVHTSERAIGQIYIPTLNGMLLVAVLVAVLGFGSSSNLASAYGVAVTGTMLVTTLLTFFVIHYGWRYNLLLSLVATGFFIAVDMAFVSSSLLKVAEGGWFPLVVGAGIFVVMLTWVRGRQALLERLQSTDVPLKSFLDSLFLAPPPRVPGTAVFLTPTPDVVPHALMHNLNHNRVLHERVVFLTVKMKDVPSVPATECAAVEPLGHACYRITLRFGFMNRPDVAQALGALPPAAGLEFDIMDTSFFLSREAIVAAAGGPSGMASWRERLFATMSRNAGNAADYFNIPANRVIEIGTQIKI.

Helical transmembrane passes span 59–79 (ISAI…ILIM), 110–130 (ILLV…LTPA), 145–165 (TALQ…LFLF), 173–193 (IGAL…AAGI), 219–239 (GFAS…AEAL), 256–276 (FGLV…LIIV), 287–307 (LLYP…ATVI), 345–365 (IYIP…VLGF), 374–394 (AYGV…FFVI), 402–422 (LLLS…FVSS), and 429–449 (EGGW…LTWV).

This sequence belongs to the HAK/KUP transporter (TC 2.A.72) family.

The protein resides in the cell inner membrane. The catalysed reaction is K(+)(in) + H(+)(in) = K(+)(out) + H(+)(out). Functionally, transport of potassium into the cell. Likely operates as a K(+):H(+) symporter. This chain is Probable potassium transport system protein Kup 2, found in Cupriavidus necator (strain ATCC 17699 / DSM 428 / KCTC 22496 / NCIMB 10442 / H16 / Stanier 337) (Ralstonia eutropha).